We begin with the raw amino-acid sequence, 266 residues long: Glucose 1-dehydrogenase (266 aa).

Position 15–39 (15–39 (LVTGASQGIGEATALRFAEEGAQVA)) interacts with NADP(+). Ser-149 is a substrate binding site. The active-site Proton acceptor is the Tyr-162.

This sequence belongs to the short-chain dehydrogenases/reductases (SDR) family. Homotetramer or homooctamer.

The enzyme catalyses D-glucose + NADP(+) = D-glucono-1,5-lactone + NADPH + H(+). In terms of biological role, oxidizes both D-glucose and D-mannose, but is 15 times more catalytically efficient with mannose. Strictly dependent on NADP. This chain is Glucose 1-dehydrogenase, found in Gluconobacter oxydans (strain 621H) (Gluconobacter suboxydans).